Consider the following 198-residue polypeptide: Small ribosomal subunit protein uS7 (198 aa).

It belongs to the universal ribosomal protein uS7 family. Part of the 30S ribosomal subunit.

One of the primary rRNA binding proteins, it binds directly to 16S rRNA where it nucleates assembly of the head domain of the 30S subunit. Is located at the subunit interface close to the decoding center. The sequence is that of Small ribosomal subunit protein uS7 from Desulfurococcus amylolyticus (strain DSM 18924 / JCM 16383 / VKM B-2413 / 1221n) (Desulfurococcus kamchatkensis).